We begin with the raw amino-acid sequence, 185 residues long: Elongation factor P (185 aa).

Belongs to the elongation factor P family.

It is found in the cytoplasm. Its pathway is protein biosynthesis; polypeptide chain elongation. In terms of biological role, involved in peptide bond synthesis. Stimulates efficient translation and peptide-bond synthesis on native or reconstituted 70S ribosomes in vitro. Probably functions indirectly by altering the affinity of the ribosome for aminoacyl-tRNA, thus increasing their reactivity as acceptors for peptidyl transferase. The polypeptide is Elongation factor P (Bordetella bronchiseptica (strain ATCC BAA-588 / NCTC 13252 / RB50) (Alcaligenes bronchisepticus)).